The chain runs to 441 residues: Cysteine proteinase (441 aa).

Cysteine 249 and cysteine 290 form a disulfide bridge. Cysteine 252 is an active-site residue. N-linked (GlcNAc...) asparagine glycans are attached at residues asparagine 270 and asparagine 345. Catalysis depends on residues histidine 381 and asparagine 403.

It belongs to the peptidase C1 family.

This chain is Cysteine proteinase (TACP), found in Theileria annulata.